Reading from the N-terminus, the 425-residue chain is Histidine--tRNA ligase (425 aa).

The protein belongs to the class-II aminoacyl-tRNA synthetase family. In terms of assembly, homodimer.

The protein resides in the cytoplasm. It carries out the reaction tRNA(His) + L-histidine + ATP = L-histidyl-tRNA(His) + AMP + diphosphate + H(+). The polypeptide is Histidine--tRNA ligase (Aeromonas salmonicida (strain A449)).